Consider the following 478-residue polypeptide: Glutamate--tRNA ligase (478 aa).

A 'HIGH' region motif is present at residues 8–18 (PSPTGYLHLGN). A 'KMSKS' region motif is present at residues 248 to 252 (KLSKR). Lys-251 serves as a coordination point for ATP.

Belongs to the class-I aminoacyl-tRNA synthetase family. Glutamate--tRNA ligase type 1 subfamily. In terms of assembly, monomer.

The protein resides in the cytoplasm. It catalyses the reaction tRNA(Glu) + L-glutamate + ATP = L-glutamyl-tRNA(Glu) + AMP + diphosphate. In terms of biological role, catalyzes the attachment of glutamate to tRNA(Glu) in a two-step reaction: glutamate is first activated by ATP to form Glu-AMP and then transferred to the acceptor end of tRNA(Glu). This is Glutamate--tRNA ligase from Sulfurihydrogenibium sp. (strain YO3AOP1).